We begin with the raw amino-acid sequence, 374 residues long: Inner membrane transport permease YhhJ (374 aa).

Residues 1–22 (MRHLRNIFNLGIKELRSLLGDK) lie on the Cytoplasmic side of the membrane. Residues 23 to 43 (AMLTLIVFSFTVSVYSSATVT) traverse the membrane as a helical segment. At 44-172 (PGSLNLAPIA…TRMRFNPNLD (129 aa)) the chain is on the periplasmic side. The ABC transmembrane type-2 domain occupies 133–369 (NGYIQNIING…TIALLRFRKT (237 aa)). The chain crosses the membrane as a helical span at residues 173-193 (PAWFGGVMAIINNITMLAIVL). Residues 194–229 (TGSALIREREHGTVEHLLVMPITPFEIMMAKIWSMG) are Cytoplasmic-facing. Residues 230-250 (LVVLVVSGLSLVLMVKGVLGV) form a helical membrane-spanning segment. Over 251–255 (PIEGS) the chain is Periplasmic. The helical transmembrane segment at 256–276 (IPLFMLGVALSLFATTSIGIF) threads the bilayer. Over 277 to 283 (MGTIARS) the chain is Cytoplasmic. A helical transmembrane segment spans residues 284–304 (MPQLGLLVILVLLPLQMLSGG). The Periplasmic segment spans residues 305–342 (STPRESMPQMVQDIMLTMPTTHFVSLAQAILYRGAGFE). A helical membrane pass occupies residues 343–363 (IVWPQFLTLMAIGGAFFTIAL). Residues 364–374 (LRFRKTIGTMA) are Cytoplasmic-facing.

The protein belongs to the ABC-2 integral membrane protein family.

Its subcellular location is the cell inner membrane. The protein is Inner membrane transport permease YhhJ (yhhJ) of Escherichia coli (strain K12).